Here is a 512-residue protein sequence, read N- to C-terminus: Extracellular serine/threonine protein kinase CeFam20 (512 aa).

Over 1-6 the chain is Cytoplasmic; the sequence is MRCNIK. Residues 7–26 traverse the membrane as a helical; Signal-anchor for type II membrane protein segment; that stretch reads RLFTLAIGVFAATLVIISFS. Over 27–512 the chain is Lumenal; sequence KDNYEREWKQ…QDKKDDKKTV (486 aa). The cysteines at positions 110 and 144 are disulfide-linked. A glycan (N-linked (GlcNAc...) asparagine) is linked at Asn113. ATP-binding residues include Gln176, Lys192, and Glu213. Glu213 contacts Mn(2+). Asn242 is a glycosylation site (N-linked (GlcNAc...) asparagine). Disulfide bonds link Cys268/Cys284 and Cys273/Cys277. 295-298 is an ATP binding site; that stretch reads QVFL. 2 disulfide bridges follow: Cys333–Cys409 and Cys410–Cys469. Residue Asp366 is part of the active site. Glu371 and Asp387 together coordinate ATP. Residue Asp387 coordinates Mn(2+). Residues 486–512 are disordered; sequence PDVSDAEQNDEEQSEEHQDKKDDKKTV. Over residues 489-499 the composition is skewed to acidic residues; sequence SDAEQNDEEQS. Positions 500–512 are enriched in basic and acidic residues; it reads EEHQDKKDDKKTV.

The protein belongs to the FAM20 family. Mn(2+) serves as cofactor.

It localises to the golgi apparatus membrane. The protein localises to the secreted. The catalysed reaction is L-seryl-[protein] + ATP = O-phospho-L-seryl-[protein] + ADP + H(+). It catalyses the reaction L-threonyl-[protein] + ATP = O-phospho-L-threonyl-[protein] + ADP + H(+). In terms of biological role, golgi serine/threonine protein kinase that phosphorylates secretory pathway proteins within Ser-x-Glu/pSer motifs. This chain is Extracellular serine/threonine protein kinase CeFam20, found in Caenorhabditis elegans.